Consider the following 513-residue polypeptide: Probable mannosyl-oligosaccharide alpha-1,2-mannosidase 1B (513 aa).

Residues 1–21 (MHLSSLSLSLTALAIVSPSAA) form the signal peptide. N-linked (GlcNAc...) asparagine glycosylation is found at N97, N117, N184, N251, N322, N348, and N368. A disulfide bridge connects residues C334 and C363. Catalysis depends on E377, which acts as the Proton donor. A Ca(2+)-binding site is contributed by T503.

The protein belongs to the glycosyl hydrolase 47 family. As to quaternary structure, monomer. Ca(2+) is required as a cofactor. The cofactor is Mg(2+).

The protein localises to the cytoplasmic vesicle lumen. It carries out the reaction N(4)-(alpha-D-Man-(1-&gt;2)-alpha-D-Man-(1-&gt;2)-alpha-D-Man-(1-&gt;3)-[alpha-D-Man-(1-&gt;2)-alpha-D-Man-(1-&gt;3)-[alpha-D-Man-(1-&gt;2)-alpha-D-Man-(1-&gt;6)]-alpha-D-Man-(1-&gt;6)]-beta-D-Man-(1-&gt;4)-beta-D-GlcNAc-(1-&gt;4)-beta-D-GlcNAc)-L-asparaginyl-[protein] (N-glucan mannose isomer 9A1,2,3B1,2,3) + 4 H2O = N(4)-(alpha-D-Man-(1-&gt;3)-[alpha-D-Man-(1-&gt;3)-[alpha-D-Man-(1-&gt;6)]-alpha-D-Man-(1-&gt;6)]-beta-D-Man-(1-&gt;4)-beta-D-GlcNAc-(1-&gt;4)-beta-D-GlcNAc)-L-asparaginyl-[protein] (N-glucan mannose isomer 5A1,2) + 4 beta-D-mannose. The catalysed reaction is N(4)-(alpha-D-Man-(1-&gt;2)-alpha-D-Man-(1-&gt;2)-alpha-D-Man-(1-&gt;3)-[alpha-D-Man-(1-&gt;3)-[alpha-D-Man-(1-&gt;2)-alpha-D-Man-(1-&gt;6)]-alpha-D-Man-(1-&gt;6)]-beta-D-Man-(1-&gt;4)-beta-D-GlcNAc-(1-&gt;4)-beta-D-GlcNAc)-L-asparaginyl-[protein] (N-glucan mannose isomer 8A1,2,3B1,3) + 3 H2O = N(4)-(alpha-D-Man-(1-&gt;3)-[alpha-D-Man-(1-&gt;3)-[alpha-D-Man-(1-&gt;6)]-alpha-D-Man-(1-&gt;6)]-beta-D-Man-(1-&gt;4)-beta-D-GlcNAc-(1-&gt;4)-beta-D-GlcNAc)-L-asparaginyl-[protein] (N-glucan mannose isomer 5A1,2) + 3 beta-D-mannose. The protein operates within protein modification; protein glycosylation. Its function is as follows. Involved in the maturation of Asn-linked oligosaccharides. Progressively trims alpha-1,2-linked mannose residues from Man(9)GlcNAc(2) to produce Man(5)GlcNAc(2). In Aspergillus niger (strain ATCC MYA-4892 / CBS 513.88 / FGSC A1513), this protein is Probable mannosyl-oligosaccharide alpha-1,2-mannosidase 1B (mns1B).